An 83-amino-acid polypeptide reads, in one-letter code: Insect toxin 2-13 (83 aa).

Positions 1 to 21 are cleaved as a signal peptide; that stretch reads MKLLLLLIITASMLIEGLVNA. In terms of domain architecture, LCN-type CS-alpha/beta spans 22–80; it reads DVYIRRHDGCKISCTVNDKYCDNECKSEGGSYGYCYAFGCWCEGLPNDKAWKSETNTCG. Disulfide bonds link Cys31-Cys79, Cys35-Cys56, Cys42-Cys61, and Cys46-Cys63. Gly80 is subject to Glycine amide.

This sequence belongs to the long (4 C-C) scorpion toxin superfamily. Sodium channel inhibitor family. Beta subfamily. Expressed by the venom gland.

The protein localises to the secreted. Depressant insect toxins cause a transient contraction paralysis followed by a slow flaccid paralysis. They bind voltage-independently to sodium channels (Nav) and block action potentials, primarily by depolarizing the axonal membrane and suppressing the sodium current. This Leiurus hebraeus (Hebrew deathstalker scorpion) protein is Insect toxin 2-13.